The following is a 479-amino-acid chain: Membrane-bound lytic murein transglycosylase F (479 aa).

Positions 1–15 are cleaved as a signal peptide; sequence MKRLLLVLCYITLLA. The tract at residues 16–258 is non-LT domain; it reads GCQKVVVEQE…HLNEKYFAHV (243 aa). An LT domain region spans residues 260-479; sequence RFDYVDTRAF…QTDAIQPQQP (220 aa). Residue E303 is part of the active site. A disordered region spans residues 457–479; sequence LQTAEAKETEEKPQTDAIQPQQP. Positions 461-470 are enriched in basic and acidic residues; the sequence is EAKETEEKPQ.

It in the N-terminal section; belongs to the bacterial solute-binding protein 3 family. The protein in the C-terminal section; belongs to the transglycosylase Slt family.

The protein localises to the cell outer membrane. It carries out the reaction Exolytic cleavage of the (1-&gt;4)-beta-glycosidic linkage between N-acetylmuramic acid (MurNAc) and N-acetylglucosamine (GlcNAc) residues in peptidoglycan, from either the reducing or the non-reducing ends of the peptidoglycan chains, with concomitant formation of a 1,6-anhydrobond in the MurNAc residue.. Its function is as follows. Murein-degrading enzyme that degrades murein glycan strands and insoluble, high-molecular weight murein sacculi, with the concomitant formation of a 1,6-anhydromuramoyl product. Lytic transglycosylases (LTs) play an integral role in the metabolism of the peptidoglycan (PG) sacculus. Their lytic action creates space within the PG sacculus to allow for its expansion as well as for the insertion of various structures such as secretion systems and flagella. The chain is Membrane-bound lytic murein transglycosylase F from Shewanella pealeana (strain ATCC 700345 / ANG-SQ1).